Here is a 350-residue protein sequence, read N- to C-terminus: Putative [LysW]-lysine/[LysW]-ornithine hydrolase (350 aa).

Residue His-72 participates in Zn(2+) binding. The active site involves Asp-74. Position 96 (Asp-96) interacts with Zn(2+). The active-site Proton acceptor is Glu-128. Residues Glu-129, Glu-152, and His-321 each contribute to the Zn(2+) site.

The protein belongs to the peptidase M20A family. LysK subfamily. The cofactor is Zn(2+). Co(2+) is required as a cofactor.

It localises to the cytoplasm. The enzyme catalyses [amino-group carrier protein]-C-terminal-gamma-(L-lysyl)-L-glutamate + H2O = [amino-group carrier protein]-C-terminal-L-glutamate + L-lysine. It catalyses the reaction [amino-group carrier protein]-C-terminal-gamma-(L-ornithyl)-L-glutamate + H2O = [amino-group carrier protein]-C-terminal-L-glutamate + L-ornithine. Its pathway is amino-acid biosynthesis; L-lysine biosynthesis via AAA pathway; L-lysine from L-alpha-aminoadipate (Thermus route): step 5/5. The protein operates within amino-acid biosynthesis; L-arginine biosynthesis. Functionally, catalyzes the release of L-lysine from [LysW]-gamma-L-lysine and the release of L-ornithine from [LysW]-L-ornithine. The chain is Putative [LysW]-lysine/[LysW]-ornithine hydrolase from Aeropyrum pernix (strain ATCC 700893 / DSM 11879 / JCM 9820 / NBRC 100138 / K1).